The chain runs to 411 residues: Dihydrosphingosine 1-phosphate phosphatase C823.11 (411 aa).

At 1–74 (MVHKKKNVDI…LDVYFMYTAT (74 aa)) the chain is on the lumenal side. A helical membrane pass occupies residues 75-95 (LGTHVFFMLALPIFFWSGCIY). Residues 96-99 (YTLD) lie on the Cytoplasmic side of the membrane. A helical membrane pass occupies residues 100 to 120 (ITQLFAAGVYFSGCIKDYFCL). The phosphatase sequence motif I stretch occupies residues 115–123 (KDYFCLPRP). The Lumenal portion of the chain corresponds to 121–170 (PRPRSPPMVRLTLSSDAEYEYGFPSTHTTNAMATGFYSLFLLLSMSDSMS). The interval 144–147 (PSTH) is phosphatase sequence motif II. The active-site Proton donor is the histidine 147. The chain crosses the membrane as a helical span at residues 171–191 (SISYYFLLSLVLLYIASISLG). Positions 191–202 (GRIYCGMHGFMD) are phosphatase sequence motif III. The Cytoplasmic segment spans residues 192–195 (RIYC). Residues 196 to 216 (GMHGFMDVSTGTILGVTLAIF) form a helical membrane-spanning segment. Histidine 198 (nucleophile) is an active-site residue. Topologically, residues 217-233 (QWKYADFFHNVWSSSST) are lumenal. Residues 234 to 254 (SVPILSVVLALFFIWFHPQPA) form a helical membrane-spanning segment. At 255–259 (ERCIC) the chain is on the cytoplasmic side. Residues 260 to 280 (LEDSISFISVIMGIDLGTWFA) traverse the membrane as a helical segment. Over 281–293 (SPESLSHLHDNLN) the chain is Lumenal. The chain crosses the membrane as a helical span at residues 294–314 (SYFLLKFFVRVLFGVCMILIW). Residues 315–387 (KSFAKQALLA…VRFDIETIAR (73 aa)) lie on the Cytoplasmic side of the membrane. The helical transmembrane segment at 388–408 (IIVYSGIGFLCTYFAPKVFLK) threads the bilayer. At 409-411 (WKI) the chain is on the lumenal side.

It belongs to the type 2 lipid phosphate phosphatase family.

It localises to the endoplasmic reticulum membrane. In terms of biological role, dihydrosphingosine 1-phosphate phosphatase required for efficient ceramide synthesis from exogenous sphingoid bases. Involved in endocytosis and calcium-mediated signaling. In Schizosaccharomyces pombe (strain 972 / ATCC 24843) (Fission yeast), this protein is Dihydrosphingosine 1-phosphate phosphatase C823.11.